The chain runs to 252 residues: Imidazole glycerol phosphate synthase subunit HisF (252 aa).

Catalysis depends on residues aspartate 11 and aspartate 130.

This sequence belongs to the HisA/HisF family. Heterodimer of HisH and HisF.

The protein localises to the cytoplasm. It carries out the reaction 5-[(5-phospho-1-deoxy-D-ribulos-1-ylimino)methylamino]-1-(5-phospho-beta-D-ribosyl)imidazole-4-carboxamide + L-glutamine = D-erythro-1-(imidazol-4-yl)glycerol 3-phosphate + 5-amino-1-(5-phospho-beta-D-ribosyl)imidazole-4-carboxamide + L-glutamate + H(+). The protein operates within amino-acid biosynthesis; L-histidine biosynthesis; L-histidine from 5-phospho-alpha-D-ribose 1-diphosphate: step 5/9. Functionally, IGPS catalyzes the conversion of PRFAR and glutamine to IGP, AICAR and glutamate. The HisF subunit catalyzes the cyclization activity that produces IGP and AICAR from PRFAR using the ammonia provided by the HisH subunit. In Bacillus cereus (strain ATCC 10987 / NRS 248), this protein is Imidazole glycerol phosphate synthase subunit HisF.